The primary structure comprises 704 residues: ATP-dependent DNA helicase Hel308 (704 aa).

ATP is bound by residues glutamine 31 and 49 to 56; that span reads SPTASGKT. The region spanning 36–200 is the Helicase ATP-binding domain; that stretch reads RKGLLDGKRL…WLNAELVATN (165 aa). The short motif at 148–151 is the DEAH box element; the sequence is DEFH. One can recognise a Helicase C-terminal domain in the interval 235 to 439; the sequence is AIIAYTLDIV…AFYSFLISII (205 aa). A binds Hjc region spans residues 366 to 645; it reads VVGYMDLIPV…LHARVKDGVK (280 aa). A required for helicase activity region spans residues 432 to 644; the sequence is YSFLISIIAS…ELHARVKDGV (213 aa). The interval 646–704 is inhibits intrinsic ATPase, and helicase; sequence PELIELVKIPGIGRVRARLLYQHDIKKPEDIVLNPEKVKQLLGPNLGEKIVREAARTIA.

Belongs to the helicase family. Hel308 subfamily. As to quaternary structure, monomer; forms a 1:2 complex with Hjc, which may form a complex with Holliday junction DNA. It depends on Mg(2+) as a cofactor.

It catalyses the reaction Couples ATP hydrolysis with the unwinding of duplex DNA by translocating in the 3'-5' direction.. The catalysed reaction is ATP + H2O = ADP + phosphate + H(+). The enzyme catalyses Couples ATP hydrolysis with the unwinding of duplex DNA at the replication fork by translocating in the 5'-3' direction. This creates two antiparallel DNA single strands (ssDNA). The leading ssDNA polymer is the template for DNA polymerase III holoenzyme which synthesizes a continuous strand.. With respect to regulation, helicase activity is inhibited by Hjc and by PCNA123 and PCNA323. An ATP, Mg(2+)-dependent DNA 3'-5' and 5'-3' helicase that may be involved in repair of stalled replication forks. Stimulated by both ss and dsDNA. Unwinds both leading and lagging strands in replication fork structures, unlike orthologs in P.furiosus and M.thermautotrophicus which only unwind the lagging strand and only have 3'-5' helicase activity. Preferentially binds dsDNA with overhangs or branched DNA. Able to anneal DNA substrates that could form a replication fork-like structure, has replication fork reversal activity (at least in vitro). This Sulfurisphaera tokodaii (strain DSM 16993 / JCM 10545 / NBRC 100140 / 7) (Sulfolobus tokodaii) protein is ATP-dependent DNA helicase Hel308.